Reading from the N-terminus, the 540-residue chain is Glucose-6-phosphate isomerase (540 aa).

Residue Glu346 is the Proton donor of the active site. Residues His377 and Lys505 contribute to the active site.

It belongs to the GPI family.

The protein localises to the cytoplasm. It catalyses the reaction alpha-D-glucose 6-phosphate = beta-D-fructose 6-phosphate. It participates in carbohydrate biosynthesis; gluconeogenesis. It functions in the pathway carbohydrate degradation; glycolysis; D-glyceraldehyde 3-phosphate and glycerone phosphate from D-glucose: step 2/4. Functionally, catalyzes the reversible isomerization of glucose-6-phosphate to fructose-6-phosphate. This chain is Glucose-6-phosphate isomerase, found in Francisella philomiragia subsp. philomiragia (strain ATCC 25017 / CCUG 19701 / FSC 153 / O#319-036).